Consider the following 142-residue polypeptide: Large ribosomal subunit protein uL13 (142 aa).

Belongs to the universal ribosomal protein uL13 family. In terms of assembly, part of the 50S ribosomal subunit.

This protein is one of the early assembly proteins of the 50S ribosomal subunit, although it is not seen to bind rRNA by itself. It is important during the early stages of 50S assembly. This chain is Large ribosomal subunit protein uL13, found in Burkholderia mallei (strain NCTC 10247).